A 73-amino-acid chain; its full sequence is uncharacterized protein (73 aa).

Residues Asn-20–Thr-49 are a coiled coil.

This is an uncharacterized protein from Acheta domesticus (House cricket).